The sequence spans 689 residues: Elongation factor G (689 aa).

The tr-type G domain maps to 9–283 (AKFRNIGIMA…AIIEFMPSPL (275 aa)). GTP-binding positions include 18–25 (AHIDAGKT), 82–86 (DTPGH), and 136–139 (NKMD).

This sequence belongs to the TRAFAC class translation factor GTPase superfamily. Classic translation factor GTPase family. EF-G/EF-2 subfamily.

The protein resides in the cytoplasm. Catalyzes the GTP-dependent ribosomal translocation step during translation elongation. During this step, the ribosome changes from the pre-translocational (PRE) to the post-translocational (POST) state as the newly formed A-site-bound peptidyl-tRNA and P-site-bound deacylated tRNA move to the P and E sites, respectively. Catalyzes the coordinated movement of the two tRNA molecules, the mRNA and conformational changes in the ribosome. The chain is Elongation factor G from Clostridium botulinum (strain 657 / Type Ba4).